The chain runs to 314 residues: Lysophospholipase D GDPD1 (314 aa).

The Extracellular portion of the chain corresponds to 1–3; the sequence is MSS. Residues 4-24 traverse the membrane as a helical segment; it reads TAAFYLLSTLGGYLVTSFLLL. Residues 25–195 are Cytoplasmic-facing; the sequence is KYPTLLHQRK…VEKCYKENSD (171 aa). In terms of domain architecture, GP-PDE spans 40-309; it reads SKHISHRGGA…DYPTKLRDFL (270 aa). E72, D74, and H87 together coordinate a divalent metal cation. Residues 196-216 form a helical membrane-spanning segment; that stretch reads IPILFSLQRVLLILGLFFTGL. Residues 217–314 lie on the Extracellular side of the membrane; it reads LPFVPIREQF…LRDFLHNFSA (98 aa).

It belongs to the glycerophosphoryl diester phosphodiesterase family. Widely expressed with high expression level in testis.

Its subcellular location is the cytoplasm. The protein localises to the membrane. It localises to the perinuclear region. It is found in the endoplasmic reticulum. The catalysed reaction is a 1-O-alkyl-sn-glycero-3-phosphocholine + H2O = a 1-O-alkyl-sn-glycero-3-phosphate + choline + H(+). It catalyses the reaction 1-hexadecanoyl-sn-glycero-3-phosphocholine + H2O = 1-hexadecanoyl-sn-glycero-3-phosphate + choline + H(+). The enzyme catalyses N-hexadecanoyl-sn-glycero-3-phosphoethanolamine + H2O = N-hexadecanoylethanolamine + sn-glycerol 3-phosphate + H(+). It carries out the reaction N-(5Z,8Z,11Z,14Z-eicosatetraenoyl)-1-(9Z-octadecenoyl)-sn-glycero-3-phosphoethanolamine + H2O = N-(5Z,8Z,11Z,14Z-eicosatetraenoyl)-ethanolamine + 1-(9Z-octadecenoyl)-sn-glycero-3-phosphate + H(+). The catalysed reaction is N,1-di-(9Z-octadecenoyl)-sn-glycero-3-phosphoethanolamine + H2O = N-(9Z-octadecenoyl) ethanolamine + 1-(9Z-octadecenoyl)-sn-glycero-3-phosphate + H(+). It catalyses the reaction N-hexadecanoyl-1-(9Z-octadecenoyl)-sn-glycero-3-phosphoethanolamine + H2O = N-hexadecanoylethanolamine + 1-(9Z-octadecenoyl)-sn-glycero-3-phosphate + H(+). The enzyme catalyses 1-O-(1Z-octadecenyl)-sn-glycero-3-phospho-N-hexadecanoyl-ethanolamine + H2O = 1-O-(1Z-octadecenyl)-sn-glycero-3-phosphate + N-hexadecanoylethanolamine + H(+). It carries out the reaction 1-hexadecanoyl-sn-glycero-3-phosphoethanolamine + H2O = 1-hexadecanoyl-sn-glycero-3-phosphate + ethanolamine + H(+). The catalysed reaction is 1-O-hexadecyl-sn-glycero-3-phosphocholine + H2O = 1-O-hexadecyl-sn-glycero-3-phosphate + choline + H(+). It catalyses the reaction 1-(9Z-octadecenoyl)-sn-glycero-3-phosphocholine + H2O = 1-(9Z-octadecenoyl)-sn-glycero-3-phosphate + choline + H(+). The enzyme catalyses N,1-dihexadecanoyl-sn-glycero-3-phosphoethanolamine + H2O = N-hexadecanoylethanolamine + 1-hexadecanoyl-sn-glycero-3-phosphate + H(+). It carries out the reaction 1-O-(1Z-octadecenyl)-sn-glycero-3-phospho-(N-5Z,8Z,11Z,14Z-eicosatetraenoyl)-ethanolamine + H2O = 1-O-(1Z-octadecenyl)-sn-glycero-3-phosphate + N-(5Z,8Z,11Z,14Z-eicosatetraenoyl)-ethanolamine + H(+). The catalysed reaction is 1-O-(1Z-octadecenyl)-sn-glycero-3-phospho-(N-9Z-octadecenoyl)-ethanolamine + H2O = 1-O-(1Z-octadecenyl)-sn-glycero-3-phosphate + N-(9Z-octadecenoyl) ethanolamine + H(+). Its activity is regulated as follows. Lysophospholipase D activity is increased by magnesium and manganese and inhibited by calcium in a concentration dependent manner. Loss of lysophospholipase D activity by addition of EDTA. Functionally, hydrolyzes lysoglycerophospholipids to produce lysophosphatidic acid (LPA) and the corresponding amines. Shows a preference for 1-O-alkyl-sn-glycero-3-phosphocholine (lyso-PAF), lysophosphatidylethanolamine (lyso-PE) and lysophosphatidylcholine (lyso-PC). May be involved in bioactive N-acylethanolamine biosynthesis from both N-acyl-lysoplasmenylethanolamin (N-acyl-lysoPlsEt) and N-acyl-lysophosphatidylethanolamin (N-acyl-lysoPE). In addition, hydrolyzes glycerophospho-N-acylethanolamine to N-acylethanolamine. Does not display glycerophosphodiester phosphodiesterase activity, since it cannot hydrolyze either glycerophosphoinositol or glycerophosphocholine. The protein is Lysophospholipase D GDPD1 of Homo sapiens (Human).